Consider the following 280-residue polypeptide: Cytochrome c1 (280 aa).

Positions 1-21 are cleaved as a signal peptide; that stretch reads MKKLLISAVSALVLGSGAALA. The heme c site is built by Cys-55, Cys-58, His-59, and Met-205. Residues 249-267 traverse the membrane as a helical segment; that stretch reads MGLVAVVMLGLLSVMLYLT.

As to quaternary structure, the main subunits of complex b-c1 are: cytochrome b, cytochrome c1 and the Rieske protein. Post-translationally, binds 1 heme c group covalently per subunit.

Its subcellular location is the cell membrane. Functionally, component of the ubiquinol-cytochrome c reductase complex (complex III or cytochrome b-c1 complex), which is a respiratory chain that generates an electrochemical potential coupled to ATP synthesis. c1 functions as an electron donor to cytochrome c. In Rhodobacter capsulatus (Rhodopseudomonas capsulata), this protein is Cytochrome c1 (petC).